Here is a 600-residue protein sequence, read N- to C-terminus: Elongation factor 4 (600 aa).

The tr-type G domain maps to 5–187 (KYIRNFSIIA…AIINKLPAPK (183 aa)). Residues 17 to 22 (DHGKST) and 134 to 137 (NKID) each bind GTP.

It belongs to the TRAFAC class translation factor GTPase superfamily. Classic translation factor GTPase family. LepA subfamily.

The protein localises to the cell inner membrane. It catalyses the reaction GTP + H2O = GDP + phosphate + H(+). Its function is as follows. Required for accurate and efficient protein synthesis under certain stress conditions. May act as a fidelity factor of the translation reaction, by catalyzing a one-codon backward translocation of tRNAs on improperly translocated ribosomes. Back-translocation proceeds from a post-translocation (POST) complex to a pre-translocation (PRE) complex, thus giving elongation factor G a second chance to translocate the tRNAs correctly. Binds to ribosomes in a GTP-dependent manner. This Rickettsia prowazekii (strain Madrid E) protein is Elongation factor 4.